The following is a 713-amino-acid chain: Undecaprenyl-diphosphooligosaccharide--protein glycotransferase (713 aa).

Topologically, residues 1-11 (MLKKEYLKNPY) are cytoplasmic. A helical transmembrane segment spans residues 12 to 35 (LVLFAMIILAYVFSVLCRFYWIWW). Over 36-96 (ASEFNEYFFN…YWLYKITPFS (61 aa)) the chain is Periplasmic. The DXD motif 1 signature appears at 52 to 54 (SND). Asp-54 is a Mn(2+) binding site. The helical transmembrane segment at 97–122 (FESIILYMSTFLSSLVVIPIILLANE) threads the bilayer. Residues 123-125 (YKR) are Cytoplasmic-facing. The helical transmembrane segment at 126-144 (PLMGFVAALLASVANSYYN) threads the bilayer. Residues 145-152 (RTMSGYYD) lie on the Periplasmic side of the membrane. Asp-152 is a binding site for Mn(2+). A DXD motif 2 motif is present at residues 152 to 154 (DTD). Residues 153-174 (TDMLVIVLPMFILFFMVRMILK) traverse the membrane as a helical segment. Residues 175 to 176 (KD) lie on the Cytoplasmic side of the membrane. A helical membrane pass occupies residues 177 to 192 (FFSLIALPLFIGIYLW). Topologically, residues 193–197 (WYPSS) are periplasmic. 194–196 (YPS) serves as a coordination point for [alpha-D-GalNAc-(1-&gt;4)]2-[beta-D-Glc-(1-&gt;3)]-[alpha-D-GalNAc-(1-&gt;4)]2-alpha-D-GalNAc-(1-&gt;3)-alpha-D-diNAcBac-tri-trans,hepta-cis-undecaprenyl diphosphate. Residues 198–215 (YTLNVALIGLFLIYTLIF) traverse the membrane as a helical segment. Topologically, residues 216 to 220 (HRKEK) are cytoplasmic. A helical membrane pass occupies residues 221 to 233 (IFYIAVILSSLTL). Residues 234-237 (SNIA) lie on the Periplasmic side of the membrane. The chain crosses the membrane as a helical span at residues 238–254 (WFYQSAIIVILFALFAL). Topologically, residues 255-260 (EQKRLN) are cytoplasmic. A helical transmembrane segment spans residues 261-278 (FMIIGILGSATLIFLILS). The Periplasmic portion of the chain corresponds to 279-324 (GGVDPILYQLKFYIFRNDESANLTQGFMYFNVNQTIQEVENVDFSE). Tyr-291 provides a ligand contact to [alpha-D-GalNAc-(1-&gt;4)]2-[beta-D-Glc-(1-&gt;3)]-[alpha-D-GalNAc-(1-&gt;4)]2-alpha-D-GalNAc-(1-&gt;3)-alpha-D-diNAcBac-tri-trans,hepta-cis-undecaprenyl diphosphate. A TIXE motif motif is present at residues 313-316 (TIQE). Residue Glu-316 participates in Mn(2+) binding. A helical transmembrane segment spans residues 325-347 (FMRRISGSEIVFLFSLFGFVWLL). Residues 348-352 (RKHKS) lie on the Cytoplasmic side of the membrane. Residues 353–369 (MIMALPILVLGFLALKG) form a helical membrane-spanning segment. Topologically, residues 370–373 (GLRF) are periplasmic. Arg-372 is a binding site for [alpha-D-GalNAc-(1-&gt;4)]2-[beta-D-Glc-(1-&gt;3)]-[alpha-D-GalNAc-(1-&gt;4)]2-alpha-D-GalNAc-(1-&gt;3)-alpha-D-diNAcBac-tri-trans,hepta-cis-undecaprenyl diphosphate. The chain crosses the membrane as a helical span at residues 374 to 396 (TIYSVPVMALGFGFLLSEFKAIL). The Cytoplasmic portion of the chain corresponds to 397–406 (VKKYSQLTSN). A helical transmembrane segment spans residues 407–427 (VCIVFATILTLAPVFIHIYNY). Over 428 to 713 (KAPTVFSQNE…RDAKVFKLKI (286 aa)) the chain is Periplasmic. Residues 457–459 (WWD) form an interacts with target acceptor peptide in protein substrate region. A WWDYG motif motif is present at residues 457 to 461 (WWDYG). Residue Tyr-462 coordinates [alpha-D-GalNAc-(1-&gt;4)]2-[beta-D-Glc-(1-&gt;3)]-[alpha-D-GalNAc-(1-&gt;4)]2-alpha-D-GalNAc-(1-&gt;3)-alpha-D-diNAcBac-tri-trans,hepta-cis-undecaprenyl diphosphate. N-linked (DATDGlc) asparagine glycosylation is present at Asn-534. Residues 568–575 (MSLIFSTV) carry the MI motif motif.

It belongs to the STT3 family. Mg(2+) serves as cofactor. Mn(2+) is required as a cofactor.

The protein localises to the cell inner membrane. It catalyses the reaction tritrans,heptacis-undecaprenyl diphosphooligosaccharide + [protein]-L-asparagine = tritrans,heptacis-undecaprenyl diphosphate + a glycoprotein with the oligosaccharide chain attached by N-beta-D-glycosyl linkage to protein L-asparagine.. Its pathway is protein modification; protein glycosylation. Oligosaccharyltransferase that catalyzes the transfer of a preassembled heptasaccharide from a lipid donor to an asparagine residue in nascent polypeptide chains, affording a beta-linked glycan to the asparagine side chain of target proteins. Functionally, oligosaccharyl transferase (OST) that catalyzes the initial transfer of a defined glycan (GalNAc(2)GlcGalNAc(3)Bac(NAc)(2) in eubacteria, where Bac(NAc)(2) is di-N-acetyl bacillosamine) from the lipid carrier undecaprenol-pyrophosphate to an asparagine residue within an Asp/Glu-Asn-X-Ser/Thr consensus motif in nascent polypeptide chains, the first step in protein N-glycosylation. The chain is Undecaprenyl-diphosphooligosaccharide--protein glycotransferase (pglB) from Campylobacter jejuni (strain RM1221).